The following is a 176-amino-acid chain: Adenine phosphoribosyltransferase (176 aa).

It belongs to the purine/pyrimidine phosphoribosyltransferase family. As to quaternary structure, homodimer.

Its subcellular location is the cytoplasm. The catalysed reaction is AMP + diphosphate = 5-phospho-alpha-D-ribose 1-diphosphate + adenine. It participates in purine metabolism; AMP biosynthesis via salvage pathway; AMP from adenine: step 1/1. Functionally, catalyzes a salvage reaction resulting in the formation of AMP, that is energically less costly than de novo synthesis. The chain is Adenine phosphoribosyltransferase from Leuconostoc mesenteroides subsp. mesenteroides (strain ATCC 8293 / DSM 20343 / BCRC 11652 / CCM 1803 / JCM 6124 / NCDO 523 / NBRC 100496 / NCIMB 8023 / NCTC 12954 / NRRL B-1118 / 37Y).